Here is a 431-residue protein sequence, read N- to C-terminus: MASPITPPRGMRDFLPAEKARREHALGVIRRSFSAHGFDEIETPVAEDVARLHAGLGGDNEKLAFSVLKRGLSGDDLRAAIESGDTLSLCDLGLRFDLTVPLARFFASHRAELSPVFRSLQIAPVWRAERPQKGRYRQFVQCDIDIVGEASQLAEAELITATAATLDALGLKDCTIRVNDRRILNALLQHCGFAEARWPRALISIDKLDKIGAEGVVAELSEGAADAAAALGGVLAGFEPHLADGGVELTAQAILRILPAGVDTAAIGELETLAHALGALPTGVRLRFDPKLVRGMGYYTGVIFEIAHPGSGSSVGGGGRYDGMIGRFLGTEVPACGFSIGFERVVDLIELPESAGPDSVVLVYDPAMPIGRLLAIKSDLAAAGRRVRLDRRAKNLKAVLDRAAAAGFRSFAFVDADTPAVALDLKPLTEL.

It belongs to the class-II aminoacyl-tRNA synthetase family. Homodimer.

It is found in the cytoplasm. It catalyses the reaction tRNA(His) + L-histidine + ATP = L-histidyl-tRNA(His) + AMP + diphosphate + H(+). The sequence is that of Histidine--tRNA ligase (hisS) from Leifsonia xyli subsp. xyli (strain CTCB07).